The chain runs to 565 residues: Probable serine/threonine-protein kinase abkA (565 aa).

Positions 44–77 form a coiled coil; that stretch reads NNNNISLKDKFKDLKDLKDNLNEKKINNDNDDDD. The Protein kinase domain occupies 231 to 565; sequence LFQDDPIAAA…FKNIFYKNYK (335 aa). Residues 237–245 and lysine 259 each bind ATP; that span reads IAAASIGQV. Aspartate 401 acts as the Proton acceptor in catalysis.

It belongs to the protein kinase superfamily. ADCK protein kinase family.

The sequence is that of Probable serine/threonine-protein kinase abkA (abkA) from Dictyostelium discoideum (Social amoeba).